Here is a 118-residue protein sequence, read N- to C-terminus: Large ribosomal subunit protein bL20 (118 aa).

It belongs to the bacterial ribosomal protein bL20 family.

Functionally, binds directly to 23S ribosomal RNA and is necessary for the in vitro assembly process of the 50S ribosomal subunit. It is not involved in the protein synthesizing functions of that subunit. The chain is Large ribosomal subunit protein bL20 from Sulfurihydrogenibium sp. (strain YO3AOP1).